A 93-amino-acid chain; its full sequence is NAD(P)H-quinone oxidoreductase subunit 4L, chloroplastic (93 aa).

Helical transmembrane passes span 1 to 21 and 60 to 80; these read MLEH…SGLI and IFAI…LSIA.

Belongs to the complex I subunit 4L family. As to quaternary structure, NDH is composed of at least 16 different subunits, 5 of which are encoded in the nucleus.

The protein resides in the plastid. The protein localises to the chloroplast thylakoid membrane. The catalysed reaction is a plastoquinone + NADH + (n+1) H(+)(in) = a plastoquinol + NAD(+) + n H(+)(out). It carries out the reaction a plastoquinone + NADPH + (n+1) H(+)(in) = a plastoquinol + NADP(+) + n H(+)(out). In terms of biological role, NDH shuttles electrons from NAD(P)H:plastoquinone, via FMN and iron-sulfur (Fe-S) centers, to quinones in the photosynthetic chain and possibly in a chloroplast respiratory chain. The immediate electron acceptor for the enzyme in this species is believed to be plastoquinone. Couples the redox reaction to proton translocation, and thus conserves the redox energy in a proton gradient. The chain is NAD(P)H-quinone oxidoreductase subunit 4L, chloroplastic from Anthoceros angustus (Hornwort).